The following is a 514-amino-acid chain: UDP-N-acetylmuramyl-tripeptide synthetase (514 aa).

UDP-N-acetyl-alpha-D-muramoyl-L-alanyl-D-glutamate is bound by residues Leu44 and Ser46. ATP is bound at residue 129 to 135 (GTNGKTS). Residues 171–172 (TT), Ser198, and Arg206 each bind UDP-N-acetyl-alpha-D-muramoyl-L-alanyl-D-glutamate. Residue Lys238 is modified to N6-carboxylysine.

Belongs to the MurCDEF family. MurE subfamily. Post-translationally, carboxylation is probably crucial for Mg(2+) binding and, consequently, for the gamma-phosphate positioning of ATP.

Its subcellular location is the cytoplasm. Its pathway is cell wall biogenesis; peptidoglycan biosynthesis. Its function is as follows. Catalyzes the addition of an amino acid to the nucleotide precursor UDP-N-acetylmuramoyl-L-alanyl-D-glutamate (UMAG) in the biosynthesis of bacterial cell-wall peptidoglycan. The chain is UDP-N-acetylmuramyl-tripeptide synthetase from Leifsonia xyli subsp. xyli (strain CTCB07).